Consider the following 460-residue polypeptide: Cysteine--tRNA ligase (460 aa).

Cysteine 27 is a Zn(2+) binding site. Positions 29–39 (PTVYDLIHVGN) match the 'HIGH' region motif. Residues cysteine 207, histidine 232, and glutamate 236 each contribute to the Zn(2+) site. The 'KMSKS' region signature appears at 264–268 (KMSKS). Residue lysine 267 participates in ATP binding.

The protein belongs to the class-I aminoacyl-tRNA synthetase family. In terms of assembly, monomer. The cofactor is Zn(2+).

The protein resides in the cytoplasm. It carries out the reaction tRNA(Cys) + L-cysteine + ATP = L-cysteinyl-tRNA(Cys) + AMP + diphosphate. This chain is Cysteine--tRNA ligase (cysS), found in Thermotoga maritima (strain ATCC 43589 / DSM 3109 / JCM 10099 / NBRC 100826 / MSB8).